The chain runs to 84 residues: Small ribosomal subunit protein bS16 (84 aa).

It belongs to the bacterial ribosomal protein bS16 family.

In Cupriavidus necator (strain ATCC 17699 / DSM 428 / KCTC 22496 / NCIMB 10442 / H16 / Stanier 337) (Ralstonia eutropha), this protein is Small ribosomal subunit protein bS16.